A 570-amino-acid polypeptide reads, in one-letter code: Formate--tetrahydrofolate ligase (570 aa).

Residue 65 to 72 participates in ATP binding; sequence TPHGEGKT.

This sequence belongs to the formate--tetrahydrofolate ligase family.

The catalysed reaction is (6S)-5,6,7,8-tetrahydrofolate + formate + ATP = (6R)-10-formyltetrahydrofolate + ADP + phosphate. It participates in one-carbon metabolism; tetrahydrofolate interconversion. The protein is Formate--tetrahydrofolate ligase of Shewanella oneidensis (strain ATCC 700550 / JCM 31522 / CIP 106686 / LMG 19005 / NCIMB 14063 / MR-1).